The primary structure comprises 30 residues: Putative cytochrome bd-II ubiquinol oxidase subunit AppX (30 aa).

Residues 4-24 (LLWFVGILLMCSLSTLVLVWL) traverse the membrane as a helical segment.

Belongs to the cytochrome ubiquinol oxidase subunit X family. In terms of assembly, able to interact with CydA and CydB upon overexpression.

It is found in the cell inner membrane. In terms of biological role, might be part of cytochrome bd-II oxidase (appB and appC). Able to restore reductant resistance to a cydX deletion mutant upon overexpression. CydX and this protein may have some functional overlap. The polypeptide is Putative cytochrome bd-II ubiquinol oxidase subunit AppX (appX) (Escherichia coli (strain K12)).